The chain runs to 102 residues: Cytochrome c-553 (102 aa).

The N-terminal stretch at 1-23 is a signal peptide; the sequence is MKRILVVMSICAALAFGVSAAMA. Heme c contacts are provided by Cys-33, Cys-36, His-37, and Met-80.

Post-translationally, binds 1 heme c group covalently per subunit.

It is found in the periplasm. Its function is as follows. Natural electron acceptor for a formate dehydrogenase. The chain is Cytochrome c-553 from Nitratidesulfovibrio vulgaris (strain DSM 19637 / Miyazaki F) (Desulfovibrio vulgaris).